The chain runs to 226 residues: ATP synthase F(0) complex subunit a (226 aa).

6 helical membrane-spanning segments follow: residues 12 to 32 (PTMMGLPIVILIIMFPSILFP), 68 to 88 (WTLMLMSLILFIGSTNLLGLL), 97 to 117 (QLSMNLGMAIPLWAGTVFMGF), 135 to 155 (IFLIPMLVIIETISLFIQPMA), 164 to 184 (ITAGHLLIHLIGGATLALMDI), and 189 to 209 (ALITFIILILLTILEFAVAMI).

This sequence belongs to the ATPase A chain family. As to quaternary structure, component of the ATP synthase complex composed at least of ATP5F1A/subunit alpha, ATP5F1B/subunit beta, ATP5MC1/subunit c (homooctomer), MT-ATP6/subunit a, MT-ATP8/subunit 8, ATP5ME/subunit e, ATP5MF/subunit f, ATP5MG/subunit g, ATP5MK/subunit k, ATP5MJ/subunit j, ATP5F1C/subunit gamma, ATP5F1D/subunit delta, ATP5F1E/subunit epsilon, ATP5PF/subunit F6, ATP5PB/subunit b, ATP5PD/subunit d, ATP5PO/subunit OSCP. ATP synthase complex consists of a soluble F(1) head domain (subunits alpha(3) and beta(3)) - the catalytic core - and a membrane F(0) domain - the membrane proton channel (subunits c, a, 8, e, f, g, k and j). These two domains are linked by a central stalk (subunits gamma, delta, and epsilon) rotating inside the F1 region and a stationary peripheral stalk (subunits F6, b, d, and OSCP). Interacts with DNAJC30; interaction is direct.

Its subcellular location is the mitochondrion inner membrane. It catalyses the reaction H(+)(in) = H(+)(out). In terms of biological role, subunit a, of the mitochondrial membrane ATP synthase complex (F(1)F(0) ATP synthase or Complex V) that produces ATP from ADP in the presence of a proton gradient across the membrane which is generated by electron transport complexes of the respiratory chain. ATP synthase complex consist of a soluble F(1) head domain - the catalytic core - and a membrane F(1) domain - the membrane proton channel. These two domains are linked by a central stalk rotating inside the F(1) region and a stationary peripheral stalk. During catalysis, ATP synthesis in the catalytic domain of F(1) is coupled via a rotary mechanism of the central stalk subunits to proton translocation. With the subunit c (ATP5MC1), forms the proton-conducting channel in the F(0) domain, that contains two crucial half-channels (inlet and outlet) that facilitate proton movement from the mitochondrial intermembrane space (IMS) into the matrix. Protons are taken up via the inlet half-channel and released through the outlet half-channel, following a Grotthuss mechanism. This Equus asinus (Donkey) protein is ATP synthase F(0) complex subunit a.